The primary structure comprises 521 residues: Probable rhamnogalacturonase B (521 aa).

An N-terminal signal peptide occupies residues 1-21 (MRLHAFTLLSLLGLVPSFAAA). A disulfide bond links Cys42 and Cys68. A glycan (N-linked (GlcNAc...) asparagine) is linked at Asn145. The active-site Proton donor is the Asp219. Cys221 and Cys238 are joined by a disulfide. A glycan (N-linked (GlcNAc...) asparagine) is linked at Asn239. His294 is a catalytic residue. N-linked (GlcNAc...) asparagine glycosylation is present at Asn321. Cystine bridges form between Cys344–Cys350 and Cys372–Cys381. The segment at 462-521 (ETPAAASRSEQVVQGAPQETGQSAPESAGPVPSGNPGPVPTGGSRPSRHRHGHHHFGSAI) is disordered. A compositionally biased stretch (polar residues) spans 469-486 (RSEQVVQGAPQETGQSAP). Basic residues predominate over residues 507-521 (PSRHRHGHHHFGSAI).

The protein belongs to the glycosyl hydrolase 28 family.

Its subcellular location is the secreted. It carries out the reaction Endohydrolysis of alpha-D-GalA-(1-&gt;2)-alpha-L-Rha glycosidic bond in the rhamnogalacturonan I backbone with initial inversion of anomeric configuration releasing oligosaccharides with beta-D-GalA at the reducing end.. Its function is as follows. Pectinolytic enzymes consist of four classes of enzymes: pectine lyase, polygalacturonase, pectin methylesterase and rhamnogalacturonase. Hydrolyzes alpha-D-galacturonopyranosyl-(1,2)-alpha-L-rhamnopyranosyl linkages in the backbone of the hairy regions of pectins. This is Probable rhamnogalacturonase B (rhgB) from Aspergillus fumigatus (strain ATCC MYA-4609 / CBS 101355 / FGSC A1100 / Af293) (Neosartorya fumigata).